The following is a 298-amino-acid chain: Type II methyltransferase M.MjaIV (298 aa).

It carries out the reaction a 2'-deoxyadenosine in DNA + S-adenosyl-L-methionine = an N(6)-methyl-2'-deoxyadenosine in DNA + S-adenosyl-L-homocysteine + H(+). Functionally, a methylase that recognizes the double-stranded sequence 5'-GTNNAC-3', methylates A-5 on both strands, and protects the DNA from cleavage by the MjaIV endonuclease. The protein is Type II methyltransferase M.MjaIV (mjaIVMP) of Methanocaldococcus jannaschii (strain ATCC 43067 / DSM 2661 / JAL-1 / JCM 10045 / NBRC 100440) (Methanococcus jannaschii).